A 236-amino-acid polypeptide reads, in one-letter code: Small ribosomal subunit protein uS2c (236 aa).

This sequence belongs to the universal ribosomal protein uS2 family.

Its subcellular location is the plastid. It is found in the chloroplast. The polypeptide is Small ribosomal subunit protein uS2c (rps2) (Saccharum hybrid (Sugarcane)).